The chain runs to 84 residues: Cytochrome b559 subunit alpha (84 aa).

The chain crosses the membrane as a helical span at residues 22-36 (IIHSITIPALFVAGW). His-24 contacts heme.

Belongs to the PsbE/PsbF family. As to quaternary structure, heterodimer of an alpha subunit and a beta subunit. PSII is composed of 1 copy each of membrane proteins PsbA, PsbB, PsbC, PsbD, PsbE, PsbF, PsbH, PsbI, PsbJ, PsbK, PsbL, PsbM, PsbT, PsbX, PsbY, PsbZ, Psb30/Ycf12, at least 3 peripheral proteins of the oxygen-evolving complex and a large number of cofactors. It forms dimeric complexes. The cofactor is heme b.

The protein localises to the plastid. The protein resides in the chloroplast thylakoid membrane. This b-type cytochrome is tightly associated with the reaction center of photosystem II (PSII). PSII is a light-driven water:plastoquinone oxidoreductase that uses light energy to abstract electrons from H(2)O, generating O(2) and a proton gradient subsequently used for ATP formation. It consists of a core antenna complex that captures photons, and an electron transfer chain that converts photonic excitation into a charge separation. This Guillardia theta (Cryptophyte) protein is Cytochrome b559 subunit alpha.